The primary structure comprises 441 residues: Ribosomal protein uS12 methylthiotransferase RimO (441 aa).

One can recognise an MTTase N-terminal domain in the interval 8 to 118; the sequence is PKIGFVSLGC…VLQHVHHYVP (111 aa). The [4Fe-4S] cluster site is built by Cys-17, Cys-53, Cys-82, Cys-150, Cys-154, and Cys-157. A Radical SAM core domain is found at 136–373; sequence LTPRHYAYLK…MQLQQQISAE (238 aa). The region spanning 376 to 441 is the TRAM domain; it reads QEKVGREILV…DEYDLWGSRV (66 aa).

This sequence belongs to the methylthiotransferase family. RimO subfamily. The cofactor is [4Fe-4S] cluster.

It localises to the cytoplasm. It catalyses the reaction L-aspartate(89)-[ribosomal protein uS12]-hydrogen + (sulfur carrier)-SH + AH2 + 2 S-adenosyl-L-methionine = 3-methylsulfanyl-L-aspartate(89)-[ribosomal protein uS12]-hydrogen + (sulfur carrier)-H + 5'-deoxyadenosine + L-methionine + A + S-adenosyl-L-homocysteine + 2 H(+). Functionally, catalyzes the methylthiolation of an aspartic acid residue of ribosomal protein uS12. The sequence is that of Ribosomal protein uS12 methylthiotransferase RimO from Salmonella paratyphi A (strain ATCC 9150 / SARB42).